The sequence spans 181 residues: MGDPKKSRKKWESPGHPWIKERIGYEQELLGKYGLRNKREIWIAQSIIRKFRHQARSLLALPPAERAVREKQLVGKLLKMGLLKRETATVDDILSLTEQDLLERRLQTIVYKKGLANTTYQARQLIIHGHIAVNGKRVTSPGYIVNVDEENLIDYYVTSSFKSRPPVMAQQEGGEAGVKQA.

The region spanning 104-166 is the S4 RNA-binding domain; that stretch reads RRLQTIVYKK…VTSSFKSRPP (63 aa).

This sequence belongs to the universal ribosomal protein uS4 family. In terms of assembly, part of the 30S ribosomal subunit. Contacts protein S5. The interaction surface between S4 and S5 is involved in control of translational fidelity.

One of the primary rRNA binding proteins, it binds directly to 16S rRNA where it nucleates assembly of the body of the 30S subunit. In terms of biological role, with S5 and S12 plays an important role in translational accuracy. This is Small ribosomal subunit protein uS4 from Saccharolobus islandicus (strain Y.N.15.51 / Yellowstone #2) (Sulfolobus islandicus).